The sequence spans 634 residues: 1-deoxy-D-xylulose-5-phosphate synthase (634 aa).

Thiamine diphosphate is bound by residues H73 and 114 to 116 (GHS). A Mg(2+)-binding site is contributed by D145. Residues 146–147 (GA), N174, Y285, and E365 each bind thiamine diphosphate. N174 contacts Mg(2+).

The protein belongs to the transketolase family. DXPS subfamily. In terms of assembly, homodimer. Requires Mg(2+) as cofactor. The cofactor is thiamine diphosphate.

The enzyme catalyses D-glyceraldehyde 3-phosphate + pyruvate + H(+) = 1-deoxy-D-xylulose 5-phosphate + CO2. It functions in the pathway metabolic intermediate biosynthesis; 1-deoxy-D-xylulose 5-phosphate biosynthesis; 1-deoxy-D-xylulose 5-phosphate from D-glyceraldehyde 3-phosphate and pyruvate: step 1/1. In terms of biological role, catalyzes the acyloin condensation reaction between C atoms 2 and 3 of pyruvate and glyceraldehyde 3-phosphate to yield 1-deoxy-D-xylulose-5-phosphate (DXP). This Desulforudis audaxviator (strain MP104C) protein is 1-deoxy-D-xylulose-5-phosphate synthase.